The primary structure comprises 82 residues: Large ribosomal subunit protein uL23 (82 aa).

The protein belongs to the universal ribosomal protein uL23 family. As to quaternary structure, part of the 50S ribosomal subunit. Contacts protein L29.

Functionally, binds to 23S rRNA. One of the proteins that surrounds the polypeptide exit tunnel on the outside of the ribosome. This is Large ribosomal subunit protein uL23 from Methanococcoides burtonii (strain DSM 6242 / NBRC 107633 / OCM 468 / ACE-M).